A 676-amino-acid chain; its full sequence is Potassium voltage-gated channel subfamily KQT member 1 (676 aa).

Disordered regions lie at residues 1–28 (MAAASSPPRAERKRWGWGRLPGARRGSA) and 62–84 (APPASPAAPAAPPVASDLGPRPP). Residues 1-120 (MAAASSPPRA…YNFLERPTGW (120 aa)) are Cytoplasmic-facing. Ser27 carries the phosphoserine; by PKA modification. Positions 62 to 73 (APPASPAAPAAP) are enriched in pro residues. Residues 121 to 142 (KCFVYHFAVFLIVLVCLIFSVL) traverse the membrane as a helical segment. At 143–153 (STIEQYAALAT) the chain is on the extracellular side. A helical membrane pass occupies residues 154-176 (GTLFWMEIVLVVFFGTEYVVRLW). At 177 to 192 (SAGCRSKYVGLWGRLR) the chain is on the cytoplasmic side. The chain crosses the membrane as a helical span at residues 193 to 218 (FARKPISIIDLIVVVASMVVLCVGSK). The Extracellular segment spans residues 219–226 (GQVFATSA). A helical; Voltage-sensor transmembrane segment spans residues 227–242 (IRGIRFLQILRMLHVD). Positions 238–246 (MLHVDRQGG) are interaction with KCNE3. Over 243–260 (RQGGTWRLLGSVVFIHRQ) the chain is Cytoplasmic. Gln244 lines the a 1,2-diacyl-sn-glycero-3-phospho-(1D-myo-inositol-4,5-bisphosphate) pocket. A helical transmembrane segment spans residues 261-283 (ELITTLYIGFLGLIFSSYFVYLA). Residues 284-299 (EKDAVNESGRVEFGSY) lie on the Extracellular side of the membrane. A glycan (N-linked (GlcNAc...) asparagine) is linked at Asn289. Positions 300–320 (ADALWWGVVTVTTIGYGDKVP) form an intramembrane region, pore-forming. Residues 321 to 322 (QT) are Extracellular-facing. Residues 323–348 (WVGKTIASCFSVFAISFFALPAGILG) form a helical membrane-spanning segment. Over 349–676 (SGFALKVQQK…VPRRGPDEGS (328 aa)) the chain is Cytoplasmic. Residues 370–382 (AAASLIQTAWRCY) are interaction with CALM. 2 positions are modified to phosphoserine: Ser407 and Ser409. Residues 515-529 (KVIRRMQYFVAKKKF) are interaction with CALM; calcium-dependent. The tract at residues 535-572 (PYDVRDVIEQYSQGHLNLMVRIKELQRRLDQSIGKPSL) is interaction with KCNE1 C-terminus. A coiled-coil region spans residues 585–621 (SNTIGARLNRVEDKVTQLDQRLALITDMLHQLLSLHG). Residues 588–616 (IGARLNRVEDKVTQLDQRLALITDMLHQL) are interaction with AKAP9. Residues 589 to 620 (GARLNRVEDKVTQLDQRLALITDMLHQLLSLH) are C-terminal assembly domain (tetramerization). The interval 620-676 (HGGSTPGSGGPPREGGAHITQPCGSGGSVDPELFLPSNTLPTYEQLTVPRRGPDEGS) is disordered. Residues 623-632 (STPGSGGPPR) are compositionally biased toward gly residues. Residues 655–664 (PSNTLPTYEQ) show a composition bias toward polar residues.

This sequence belongs to the potassium channel family. KQT (TC 1.A.1.15) subfamily. Kv7.1/KCNQ1 sub-subfamily. Tetramer. Heterotetramer with KCNE1; targets to the membrane raft. Interacts (via C-terminus) with calmodulin; forms a heterooctameric structure (with 4:4 KCNQ1:CALM stoichiometry); the interaction is calcium-independent, constitutive, participates in the proper assembly of a functional channel and also acts a calcium sensor. KCNQ1 channels interact more strongly with Ca(2+)-CALM than with apoCALM. Interacts with AKAP9; targets protein kinase A (PKA) catalytic and regulatory subunits and protein phosphatase 1 (PP1) to the KCNQ1-KCNE1 complex, allowing PKA-mediated phosphorylation and increase of delayed rectifier potassium channel activity. Interacts with KCNE2; forms a heterooligomer complex that targets to the membrane raft and leading to currents with an apparently instantaneous activation, a rapid deactivation process and a linear current-voltage relationship and decreases the amplitude of the outward current. Interacts with AP2M1; mediates estrogen-induced internalization via clathrin-coated vesicles. Interacts with NEDD4L; promotes internalization and decreases I(Ks) currents. Interacts with USP2; counteracts the NEDD4L-specific down-regulation of I(Ks) and restore plasma membrane localization. Heterotetramer with KCNQ5; has a voltage-gated potassium channel activity. Interacts with KCNE3; four KCNE3 molecules are bound to one KCNQ1 tetramer (4:4 KCNQ1:KCNE3 stoichiometry); alters membrane raft localization; affects KCNQ1 structure and gating properties. Interacts with KCNE4; impairs KCNQ1 localization in lipid rafts and inhibits voltage-gated potassium channel activity. Interacts with KCNE5; impairs KCNQ1 localization in lipid rafts and only conducts current upon strong and continued depolarization. Interacts with SLC5A3; forms coregulatory channel-transporter complexes that modulate Na(+)-coupled myo-inositol influx through the transporter. Phosphorylation at Ser-27 by PKA; increases delayed rectifier potassium channel activity of the KCNQ1-KCNE1 complex through a macromolecular complex that includes PKA, PP1, and the targeting protein AKAP9. In terms of processing, ubiquitinated by NEDD4L; promotes internalization. The ubiquitinylated form is internalized through a clathrin-mediated endocytosis by interacting with AP2M1 and is recycled back to the cell membrane via RAB4A and RAB11A. Post-translationally, deubiquitinated by USP2; counteracts the NEDD4L-specific down-regulation of I(Ks) and restores the membrane localization. Abundantly expressed in heart, pancreas, prostate, kidney, small intestine and peripheral blood leukocytes. Less abundant in placenta, lung, spleen, colon, thymus, testis and ovaries.

It is found in the cell membrane. It localises to the cytoplasmic vesicle membrane. The protein resides in the early endosome. Its subcellular location is the membrane raft. The protein localises to the endoplasmic reticulum. It is found in the basolateral cell membrane. It localises to the apical cell membrane. It carries out the reaction K(+)(in) = K(+)(out). PIP2 molecule is essential to activate KCNQ channels by inducing the coupling of the voltage-sensing domain (VSD) and the pore-forming domain (PD). Upon channel activation, PIP2 disrupts the VSD-calmodulin/CALM interactions, causing the release of CALM from the VSD which triggers the opening of the gate. Calcium potentiates KCNQ1 channel current through calcium-bound CALM. Calcium-bound CALM competes with PIP2 to stabilize the channel open state. Its function is as follows. Pore-forming subunit of the voltage-gated potassium (Kv) channel involved in the regulation of cardiomyocyte excitability and important in normal development and functions of myocardium, inner ear, stomach and colon. Associates with KCNE beta subunits that modulates current kinetics. Induces a voltage-dependent current by rapidly activating and slowly deactivating potassium-selective outward current. Also promotes a delayed voltage activated potassium current showing outward rectification characteristic. During beta-adrenergic receptor stimulation, participates in cardiac repolarization by associating with KCNE1 to form the I(Ks) cardiac potassium current that increases the amplitude and slows down the activation kinetics of outward potassium current I(Ks). Muscarinic agonist oxotremorine-M strongly suppresses KCNQ1/KCNE1 current. When associated with KCNE3, forms the potassium channel that is important for cyclic AMP-stimulated intestinal secretion of chloride ions. This interaction with KCNE3 is reduced by 17beta-estradiol, resulting in the reduction of currents. During conditions of increased substrate load, maintains the driving force for proximal tubular and intestinal sodium ions absorption, gastric acid secretion, and cAMP-induced jejunal chloride ions secretion. Allows the provision of potassium ions to the luminal membrane of the secretory canaliculus in the resting state as well as during stimulated acid secretion. When associated with KCNE2, forms a heterooligomer complex leading to currents with an apparently instantaneous activation, a rapid deactivation process and a linear current-voltage relationship and decreases the amplitude of the outward current. When associated with KCNE4, inhibits voltage-gated potassium channel activity. When associated with KCNE5, this complex only conducts current upon strong and continued depolarization. Also forms a heterotetramer with KCNQ5; has a voltage-gated potassium channel activity. Binds with phosphatidylinositol 4,5-bisphosphate. KCNQ1-KCNE2 channel associates with Na(+)-coupled myo-inositol symporter in the apical membrane of choroid plexus epithelium and regulates the myo-inositol gradient between blood and cerebrospinal fluid with an impact on neuron excitability. Functionally, non-functional alone but modulatory when coexpressed with the full-length isoform 1. The protein is Potassium voltage-gated channel subfamily KQT member 1 of Homo sapiens (Human).